The following is a 264-amino-acid chain: S-adenosylmethionine decarboxylase proenzyme (264 aa).

S113 acts as the Schiff-base intermediate with substrate; via pyruvic acid in catalysis. Position 113 is a pyruvic acid (Ser); by autocatalysis (S113). H118 functions as the Proton acceptor; for processing activity in the catalytic mechanism. C141 (proton donor; for catalytic activity) is an active-site residue.

The protein belongs to the prokaryotic AdoMetDC family. Type 2 subfamily. As to quaternary structure, heterooctamer of four alpha and four beta chains arranged as a tetramer of alpha/beta heterodimers. The cofactor is pyruvate. Is synthesized initially as an inactive proenzyme. Formation of the active enzyme involves a self-maturation process in which the active site pyruvoyl group is generated from an internal serine residue via an autocatalytic post-translational modification. Two non-identical subunits are generated from the proenzyme in this reaction, and the pyruvate is formed at the N-terminus of the alpha chain, which is derived from the carboxyl end of the proenzyme. The post-translation cleavage follows an unusual pathway, termed non-hydrolytic serinolysis, in which the side chain hydroxyl group of the serine supplies its oxygen atom to form the C-terminus of the beta chain, while the remainder of the serine residue undergoes an oxidative deamination to produce ammonia and the pyruvoyl group blocking the N-terminus of the alpha chain.

It carries out the reaction S-adenosyl-L-methionine + H(+) = S-adenosyl 3-(methylsulfanyl)propylamine + CO2. It participates in amine and polyamine biosynthesis; S-adenosylmethioninamine biosynthesis; S-adenosylmethioninamine from S-adenosyl-L-methionine: step 1/1. Functionally, catalyzes the decarboxylation of S-adenosylmethionine to S-adenosylmethioninamine (dcAdoMet), the propylamine donor required for the synthesis of the polyamines spermine and spermidine from the diamine putrescine. This Pseudomonas syringae pv. tomato (strain ATCC BAA-871 / DC3000) protein is S-adenosylmethionine decarboxylase proenzyme.